Reading from the N-terminus, the 218-residue chain is N-(5'-phosphoribosyl)anthranilate isomerase (218 aa).

The protein belongs to the TrpF family.

It catalyses the reaction N-(5-phospho-beta-D-ribosyl)anthranilate = 1-(2-carboxyphenylamino)-1-deoxy-D-ribulose 5-phosphate. It participates in amino-acid biosynthesis; L-tryptophan biosynthesis; L-tryptophan from chorismate: step 3/5. In Halobacterium salinarum (strain ATCC 29341 / DSM 671 / R1), this protein is N-(5'-phosphoribosyl)anthranilate isomerase.